We begin with the raw amino-acid sequence, 258 residues long: MYRNILRKLKRQINTILKIYIFIKKHEHHLRKLFVIFQVIISIVLLSLSVTTNDHDHLFDSWYYFASHLILSLFGIFVFFKKSTNSKLLYLYVILLSGLLITASFSFFWYSGELNIIENTCISDQCNHDRAYYRKKTYKIIALIVVEGVALHPNLSWLIQVLKKERKLKQLNTINNTNDTAIRSPSLNNISGNNNNNINNNNINNSNNNINNTSYNNDYFNNHNIINNNKNNIYNNNNKINSELQPPSILNKNSKPIE.

4 consecutive transmembrane segments (helical) span residues 33–53, 59–79, 88–108, and 140–160; these read LFVIFQVIISIVLLSLSVTTN, FDSWYYFASHLILSLFGIFVF, LLYLYVILLSGLLITASFSFF, and IIALIVVEGVALHPNLSWLIQ. Residues 237 to 258 are disordered; that stretch reads NNKINSELQPPSILNKNSKPIE. Residues 242–258 show a composition bias toward polar residues; it reads SELQPPSILNKNSKPIE.

The protein localises to the membrane. This is an uncharacterized protein from Dictyostelium discoideum (Social amoeba).